A 287-amino-acid polypeptide reads, in one-letter code: Putative holocytochrome-c1 synthase (287 aa).

The segment covering 1–12 has biased composition (polar residues); the sequence is MRGFGSDSSQAS. Disordered regions lie at residues 1–63 and 81–100; these read MRGF…QPSS and QSQS…SAPL. 2 stretches are compositionally biased toward low complexity: residues 31–63 and 81–92; these read QARA…QPSS and QSQSANSTQQAQ.

It belongs to the cytochrome c-type heme lyase family.

It is found in the mitochondrion inner membrane. It carries out the reaction holo-[cytochrome c] = apo-[cytochrome c] + heme b. In terms of biological role, probable lyase that catalyzes the covalent linking of the heme group to the cytochrome C apoprotein to produce the mature functional cytochrome. In Chaetomium thermophilum (strain DSM 1495 / CBS 144.50 / IMI 039719) (Thermochaetoides thermophila), this protein is Putative holocytochrome-c1 synthase.